A 36-amino-acid chain; its full sequence is MERMVVDSKVMVGKPVIKGTRIPVDANVRIRNLQFY.

This is an uncharacterized protein from Archaeoglobus fulgidus (strain ATCC 49558 / DSM 4304 / JCM 9628 / NBRC 100126 / VC-16).